The primary structure comprises 341 residues: 4-hydroxythreonine-4-phosphate dehydrogenase (341 aa).

T126 is a binding site for substrate. Positions 161, 206, and 272 each coordinate a divalent metal cation. The substrate site is built by K280, N289, and R298.

Belongs to the PdxA family. In terms of assembly, homodimer. It depends on a divalent metal cation as a cofactor.

It localises to the cytoplasm. It catalyses the reaction 4-(phosphooxy)-L-threonine + NAD(+) = 3-amino-2-oxopropyl phosphate + CO2 + NADH. It functions in the pathway cofactor biosynthesis; pyridoxine 5'-phosphate biosynthesis; pyridoxine 5'-phosphate from D-erythrose 4-phosphate: step 4/5. Catalyzes the NAD(P)-dependent oxidation of 4-(phosphooxy)-L-threonine (HTP) into 2-amino-3-oxo-4-(phosphooxy)butyric acid which spontaneously decarboxylates to form 3-amino-2-oxopropyl phosphate (AHAP). The polypeptide is 4-hydroxythreonine-4-phosphate dehydrogenase (Thermosynechococcus vestitus (strain NIES-2133 / IAM M-273 / BP-1)).